Consider the following 411-residue polypeptide: Arginine deiminase (411 aa).

The active-site Amidino-cysteine intermediate is the Cys-401.

This sequence belongs to the arginine deiminase family. Glycosylated.

It is found in the cytoplasm. It catalyses the reaction L-arginine + H2O = L-citrulline + NH4(+). Its pathway is amino-acid degradation; L-arginine degradation via ADI pathway; carbamoyl phosphate from L-arginine: step 1/2. This is Arginine deiminase from Streptococcus pyogenes serotype M3 (strain ATCC BAA-595 / MGAS315).